A 331-amino-acid polypeptide reads, in one-letter code: Cathepsin 7 (331 aa).

The N-terminal stretch at 1 to 17 (MTVAVFLAILCLRAALA) is a signal peptide. The propeptide at 18–111 (APRPDYSLDA…GKHIQKRNVK (94 aa)) is activation peptide. The Nuclear localization signal signature appears at 33–50 (KRNNAKTYSPEEEKQRRA). Residue Asn-72 is glycosylated (N-linked (GlcNAc...) asparagine). 3 cysteine pairs are disulfide-bonded: Cys-133–Cys-176, Cys-167–Cys-209, and Cys-267–Cys-320. Cys-136 is an active-site residue. Residues His-274 and Asn-298 contribute to the active site.

The protein belongs to the peptidase C1 family.

The protein resides in the endosome. It localises to the lysosome. The protein localises to the cytoplasm. Its subcellular location is the perinuclear region. It is found in the golgi apparatus. The protein resides in the nucleus. It localises to the secreted. The protein localises to the extracellular space. Involved in trophoblast cell proliferation and differentiation probably by affecting mitotic cell cycle progression. Proteolytic activity and nuclear localization are essential for its role in cell cycle progression. This chain is Cathepsin 7 (Cts7), found in Rattus norvegicus (Rat).